The sequence spans 90 residues: Small ribosomal subunit protein uS15 (90 aa).

Belongs to the universal ribosomal protein uS15 family. Part of the 30S ribosomal subunit. Forms a bridge to the 50S subunit in the 70S ribosome, contacting the 23S rRNA.

One of the primary rRNA binding proteins, it binds directly to 16S rRNA where it helps nucleate assembly of the platform of the 30S subunit by binding and bridging several RNA helices of the 16S rRNA. Its function is as follows. Forms an intersubunit bridge (bridge B4) with the 23S rRNA of the 50S subunit in the ribosome. This Helicobacter pylori (strain P12) protein is Small ribosomal subunit protein uS15.